A 274-amino-acid chain; its full sequence is tRNA dimethylallyltransferase (274 aa).

Positions 9–12 (DSLS) are interaction with substrate tRNA.

It belongs to the IPP transferase family. Monomer. The cofactor is Mg(2+).

The enzyme catalyses adenosine(37) in tRNA + dimethylallyl diphosphate = N(6)-dimethylallyladenosine(37) in tRNA + diphosphate. Its function is as follows. Catalyzes the transfer of a dimethylallyl group onto the adenine at position 37 in tRNAs that read codons beginning with uridine, leading to the formation of N6-(dimethylallyl)adenosine (i(6)A). In Helicobacter pylori (strain P12), this protein is tRNA dimethylallyltransferase (miaA).